The sequence spans 282 residues: Heat stress transcription factor A-6a (282 aa).

Residues 17–111 (PTAFLTKTYN…LLKNIKRRKT (95 aa)) mediate DNA binding. The segment at 111-177 (TSSQTQTQSL…MMMNFLLKKI (67 aa)) is hydrophobic repeat HR-A/B. The short motif at 175 to 190 (KKIKKPSFLQSLRKRN) is the Bipartite nuclear localization signal element. Positions 261-270 (EGIWKGFVLS) match the AHA motif.

It belongs to the HSF family. Class A subfamily. Homotrimer. In terms of processing, exhibits temperature-dependent phosphorylation.

Its subcellular location is the nucleus. Functionally, transcriptional activator that specifically binds DNA sequence 5'-AGAAnnTTCT-3' known as heat shock promoter elements (HSE). The protein is Heat stress transcription factor A-6a (HSFA6A) of Arabidopsis thaliana (Mouse-ear cress).